Reading from the N-terminus, the 276-residue chain is Bis(5'-nucleosyl)-tetraphosphatase, symmetrical (276 aa).

This sequence belongs to the Ap4A hydrolase family.

It catalyses the reaction P(1),P(4)-bis(5'-adenosyl) tetraphosphate + H2O = 2 ADP + 2 H(+). In terms of biological role, hydrolyzes diadenosine 5',5'''-P1,P4-tetraphosphate to yield ADP. In Neisseria gonorrhoeae (strain ATCC 700825 / FA 1090), this protein is Bis(5'-nucleosyl)-tetraphosphatase, symmetrical.